We begin with the raw amino-acid sequence, 159 residues long: Deoxyuridine 5'-triphosphate nucleotidohydrolase (159 aa).

Substrate is bound by residues 78 to 80 (RSG), Asn-91, 95 to 97 (LID), and Met-105.

This sequence belongs to the dUTPase family. It depends on Mg(2+) as a cofactor.

It carries out the reaction dUTP + H2O = dUMP + diphosphate + H(+). It participates in pyrimidine metabolism; dUMP biosynthesis; dUMP from dCTP (dUTP route): step 2/2. Functionally, this enzyme is involved in nucleotide metabolism: it produces dUMP, the immediate precursor of thymidine nucleotides and it decreases the intracellular concentration of dUTP so that uracil cannot be incorporated into DNA. The protein is Deoxyuridine 5'-triphosphate nucleotidohydrolase of Buchnera aphidicola subsp. Schizaphis graminum (strain Sg).